The following is a 285-amino-acid chain: Probable ribosomal RNA small subunit methyltransferase A (285 aa).

S-adenosyl-L-methionine-binding residues include histidine 29, leucine 31, glycine 58, glutamate 79, aspartate 107, and asparagine 122.

The protein belongs to the class I-like SAM-binding methyltransferase superfamily. rRNA adenine N(6)-methyltransferase family. RsmA subfamily.

The protein resides in the cytoplasm. In terms of biological role, specifically dimethylates two adjacent adenosines in the loop of a conserved hairpin near the 3'-end of 16S rRNA in the 30S particle. May play a critical role in biogenesis of 30S subunits. In Haloarcula marismortui (strain ATCC 43049 / DSM 3752 / JCM 8966 / VKM B-1809) (Halobacterium marismortui), this protein is Probable ribosomal RNA small subunit methyltransferase A.